We begin with the raw amino-acid sequence, 294 residues long: Indole-3-glycerol phosphate synthase (294 aa).

The protein belongs to the TrpC family.

It carries out the reaction 1-(2-carboxyphenylamino)-1-deoxy-D-ribulose 5-phosphate + H(+) = (1S,2R)-1-C-(indol-3-yl)glycerol 3-phosphate + CO2 + H2O. The protein operates within amino-acid biosynthesis; L-tryptophan biosynthesis; L-tryptophan from chorismate: step 4/5. The chain is Indole-3-glycerol phosphate synthase from Parasynechococcus marenigrum (strain WH8102).